The sequence spans 159 residues: MQSKEDFIEMRVPASAEYVSLIRLTLSGVFSRAGATYDDIEDAKIAVSEAVTNAVKHAYKENNNVGIINIYFEILEDKIKIVISDKGDSFDYETTKSKIGPYDKDENIDFLREGGLGLFLIESLMDEVTVYKEPGVTISMTKYIKKEQVRNNGERVEIS.

Belongs to the anti-sigma-factor family.

It carries out the reaction L-seryl-[protein] + ATP = O-phospho-L-seryl-[protein] + ADP + H(+). The enzyme catalyses L-threonyl-[protein] + ATP = O-phospho-L-threonyl-[protein] + ADP + H(+). Its function is as follows. Negative regulator of sigma-B activity. Phosphorylates and inactivates its specific antagonist protein, RsbV. Upon phosphorylation of RsbV, RsbW is released and binds to sigma-B, thereby blocking its ability to form an RNA polymerase holoenzyme (E-sigma-B). The polypeptide is Serine-protein kinase RsbW (Staphylococcus aureus).